The chain runs to 89 residues: Large ribosomal subunit protein bL27 (89 aa).

The tract at residues 1–21 is disordered; sequence MAHKKAGGSSRNGRDSQSKRL.

This sequence belongs to the bacterial ribosomal protein bL27 family.

The polypeptide is Large ribosomal subunit protein bL27 (Rhizobium rhizogenes (strain K84 / ATCC BAA-868) (Agrobacterium radiobacter)).